Reading from the N-terminus, the 774-residue chain is MMQRPFRPEEYSLKETSPHLGGGAAGDKLTTTYDLVEQMQYLYVRVVKAKDLPSKDITGSCDPYVEVKLGNYKGTTRHFEKKTNPEWNQVFAFSKERIQSSVVEIIVKDKDFVKDDFIGRVLFDLNEVPKRVPPDSPLAPQWYRLEERNGHKVKGELMLAVWMGTQADEAFPEAWHSDAASIPGDGLASIRSKVYLTPKLWYLRVNVIEAQDLIPNDRTRFPDVYVKAMLGNQALRTRVSPSRTLNPMWNEDLMFVAAEPFEEHLILSVEDRIAPGKDDVLGRTIISLQHVPRRLDHKLLNSQWYNLEKHVIVDGEQKKETKFSSRIHLRICLEGGYHVLDESTHYSSDLRPTAKQLWKHSIGILELGILTAQGLLPMKTKDGRGTTDAYCVAKYGQKWVRTRTIIDSFTPKWNEQYTWEVYDPCTVITIGVFDNCHLNGGEKANGARDTRIGKVRIRLSTLETDRVYTHAYPLIVLTPAGVKKMGEVQLAVRFTCSSLLNMMHLYSQPLLPKMHYVHPLSVMQVDNLRRQATNIVSTRLSRAEPPLRKEIVEYMLDVDSHMWSMRKSKANFFRIMGVLSPLIAVAKWFDQICHWRNPLTTILIHILFVILVLYPELILPTIFLYLFLIGVWYYRWRPRQPPHMDTRLSHAESAHPDELDEEFDTFPTSRPPDIVRMRYDRLRSVAGRIQTVVGDLATQGERLQSLLSWRDPRATALFVTFCFVAAIVLYVTPFRVVVFLAGLYTLRHPRFRHKMPSVPLNFFRRLPARTDSML.

Positions M1–S17 are enriched in basic and acidic residues. Residues M1–A25 are disordered. 3 consecutive C2 domains span residues G23 to Y143, I182 to Y305, and Y346 to Y472. 5 residues coordinate Ca(2+): D56, D62, D109, D111, and D116. A run of 3 helical transmembrane segments spans residues I575–W595, I606–L626, and A714–F734.

It belongs to the MCTP family. In terms of assembly, interacts with OSH1. Ca(2+) serves as cofactor. As to expression, expressed in roots, stems, lemma, palea, pistils and ovules. Expressed at low levels in leaves.

Its subcellular location is the cell membrane. Functionally, promotes nuclear translocation of the transcription factor OSH1, which directly suppresses the auxin biosynthetic gene YUCCA4 during the late development of anthers. Reduction of auxin levels at late stage of anther development, after meiosis of microspore mother cells, is necessary for normal anther dehiscence and seed setting. Required for jasmonate (JA) biosynthetic genes expression and JA production in anthers. This Oryza sativa subsp. japonica (Rice) protein is FT-interacting protein 7.